We begin with the raw amino-acid sequence, 187 residues long: ATP synthase subunit b 2 (187 aa).

Residues 32-52 (TTFAAQILWLAIAFGLLYYLM) traverse the membrane as a helical segment.

This sequence belongs to the ATPase B chain family. In terms of assembly, F-type ATPases have 2 components, F(1) - the catalytic core - and F(0) - the membrane proton channel. F(1) has five subunits: alpha(3), beta(3), gamma(1), delta(1), epsilon(1). F(0) has three main subunits: a(1), b(2) and c(10-14). The alpha and beta chains form an alternating ring which encloses part of the gamma chain. F(1) is attached to F(0) by a central stalk formed by the gamma and epsilon chains, while a peripheral stalk is formed by the delta and b chains.

It localises to the cell inner membrane. Its function is as follows. F(1)F(0) ATP synthase produces ATP from ADP in the presence of a proton or sodium gradient. F-type ATPases consist of two structural domains, F(1) containing the extramembraneous catalytic core and F(0) containing the membrane proton channel, linked together by a central stalk and a peripheral stalk. During catalysis, ATP synthesis in the catalytic domain of F(1) is coupled via a rotary mechanism of the central stalk subunits to proton translocation. Functionally, component of the F(0) channel, it forms part of the peripheral stalk, linking F(1) to F(0). The b'-subunit is a diverged and duplicated form of b found in plants and photosynthetic bacteria. This chain is ATP synthase subunit b 2 (atpF2), found in Methylobacterium sp. (strain 4-46).